Reading from the N-terminus, the 887-residue chain is Inter-alpha-trypsin inhibitor heavy chain H3 (887 aa).

Positions 1-21 (MVTLWWPCLVLALLSGLETSG) are cleaved as a signal peptide. Positions 22-33 (FPRSPLRLLGKR) are excised as a propeptide. Residues 29–158 (LLGKRSLPEG…KVIFELTYEE (130 aa)) enclose the VIT domain. Residue Asn91 is glycosylated (N-linked (GlcNAc...) asparagine). One can recognise a VWFA domain in the interval 282 to 442 (PKNIAFVIDV…YNFLESLALE (161 aa)). Residue Asn580 is glycosylated (N-linked (GlcNAc...) asparagine). An Aspartate 1-(chondroitin 4-sulfate)-ester modification is found at Asp647. Positions 648 to 887 (PHFIIQVPGK…HTDYIVPSLF (240 aa)) are excised as a propeptide.

Belongs to the ITIH family. In terms of assembly, I-alpha-I plasma protease inhibitors are assembled from one or two heavy chains (HC) and one light chain, bikunin. Pre-alpha-inhibitor (P-alpha-I) is composed of ITIH3/HC3 and bikunin. Post-translationally, heavy chains are linked to bikunin via chondroitin 4-sulfate esterified to the alpha-carboxyl of the C-terminal aspartate after propeptide cleavage.

It is found in the secreted. Functionally, may act as a carrier of hyaluronan in serum or as a binding protein between hyaluronan and other matrix protein, including those on cell surfaces in tissues to regulate the localization, synthesis and degradation of hyaluronan which are essential to cells undergoing biological processes. The sequence is that of Inter-alpha-trypsin inhibitor heavy chain H3 (Itih3) from Rattus norvegicus (Rat).